The primary structure comprises 258 residues: Deoxyribose-phosphate aldolase (258 aa).

D102 (proton donor/acceptor) is an active-site residue. The active-site Schiff-base intermediate with acetaldehyde is K165. K199 (proton donor/acceptor) is an active-site residue.

Belongs to the DeoC/FbaB aldolase family. DeoC type 2 subfamily.

It is found in the cytoplasm. It carries out the reaction 2-deoxy-D-ribose 5-phosphate = D-glyceraldehyde 3-phosphate + acetaldehyde. Its pathway is carbohydrate degradation; 2-deoxy-D-ribose 1-phosphate degradation; D-glyceraldehyde 3-phosphate and acetaldehyde from 2-deoxy-alpha-D-ribose 1-phosphate: step 2/2. Its function is as follows. Catalyzes a reversible aldol reaction between acetaldehyde and D-glyceraldehyde 3-phosphate to generate 2-deoxy-D-ribose 5-phosphate. This is Deoxyribose-phosphate aldolase from Vibrio parahaemolyticus serotype O3:K6 (strain RIMD 2210633).